Consider the following 505-residue polypeptide: Mannosylglucosyl-3-phosphoglycerate synthase (505 aa).

In terms of assembly, monomer in solution.

The catalysed reaction is (2R)-2-O-(alpha-D-glucopyranosyl)-3-phospho-glycerate + GDP-alpha-D-mannose = (2R)-2-O-[alpha-D-mannopyranosyl-(1-&gt;2)-alpha-D-glucopyranosyl]-3-phospho-glycerate + GDP + H(+). Its activity is regulated as follows. Not strictly dependent on divalent cations, but the presence of Mn(2+), Ca(2+), Mg(2+) or Co(2+) stimulates activity. Functionally, involved in the biosynthesis of the compatible solute mannosylglucosylglycerate through a phosphorylating pathway. Catalyzes the conversion of glucosyl-3-phosphoglycerate (GPG) to mannosylglucosyl-3-phosphoglycerate (MGPG). This Petrotoga mobilis (strain DSM 10674 / SJ95) protein is Mannosylglucosyl-3-phosphoglycerate synthase.